A 368-amino-acid chain; its full sequence is Carbamoyl phosphate synthase small chain (368 aa).

Residues 1–178 form a CPSase region; that stretch reads MKAVLGLEDG…GAECAWKGSG (178 aa). 3 residues coordinate L-glutamine: serine 45, glycine 230, and glycine 232. One can recognise a Glutamine amidotransferase type-1 domain in the interval 182–368; it reads HAVVVDLGIK…KVVKVLGGDL (187 aa). The active-site Nucleophile is the cysteine 257. L-glutamine contacts are provided by phenylalanine 258, glutamine 261, asparagine 299, glycine 301, and tyrosine 302. Active-site residues include histidine 342 and glutamate 344.

It belongs to the CarA family. As to quaternary structure, composed of two chains; the small (or glutamine) chain promotes the hydrolysis of glutamine to ammonia, which is used by the large (or ammonia) chain to synthesize carbamoyl phosphate. Tetramer of heterodimers (alpha,beta)4.

It catalyses the reaction hydrogencarbonate + L-glutamine + 2 ATP + H2O = carbamoyl phosphate + L-glutamate + 2 ADP + phosphate + 2 H(+). The enzyme catalyses L-glutamine + H2O = L-glutamate + NH4(+). It functions in the pathway amino-acid biosynthesis; L-arginine biosynthesis; carbamoyl phosphate from bicarbonate: step 1/1. It participates in pyrimidine metabolism; UMP biosynthesis via de novo pathway; (S)-dihydroorotate from bicarbonate: step 1/3. Functionally, small subunit of the glutamine-dependent carbamoyl phosphate synthetase (CPSase). CPSase catalyzes the formation of carbamoyl phosphate from the ammonia moiety of glutamine, carbonate, and phosphate donated by ATP, constituting the first step of 2 biosynthetic pathways, one leading to arginine and/or urea and the other to pyrimidine nucleotides. The small subunit (glutamine amidotransferase) binds and cleaves glutamine to supply the large subunit with the substrate ammonia. This Methanosarcina acetivorans (strain ATCC 35395 / DSM 2834 / JCM 12185 / C2A) protein is Carbamoyl phosphate synthase small chain.